The sequence spans 686 residues: MAM domain-containing protein 2 (686 aa).

Positions 1 to 18 (MLLRGVLLALQALQLAGA) are cleaved as a signal peptide. 4 consecutive MAM domains span residues 24–169 (GSCA…YCIE), 168–329 (IECD…HCQN), 340–498 (ASCN…SCSS), and 507–666 (GECT…PCGE). N-linked (GlcNAc...) asparagine glycosylation is found at Asn134 and Asn329. Disordered stretches follow at residues 521 to 543 (EKRN…TGPK) and 665 to 686 (GEME…EIEY). N-linked (GlcNAc...) asparagine glycosylation is present at Asn524.

Post-translationally, O-glycosylated.

The protein localises to the secreted. The protein resides in the extracellular space. It is found in the extracellular matrix. In Homo sapiens (Human), this protein is MAM domain-containing protein 2 (MAMDC2).